Consider the following 234-residue polypeptide: Demethylmenaquinone methyltransferase (234 aa).

S-adenosyl-L-methionine contacts are provided by residues Thr-58, Asp-79, and 104–105 (NA).

It belongs to the class I-like SAM-binding methyltransferase superfamily. MenG/UbiE family.

The enzyme catalyses a 2-demethylmenaquinol + S-adenosyl-L-methionine = a menaquinol + S-adenosyl-L-homocysteine + H(+). It functions in the pathway quinol/quinone metabolism; menaquinone biosynthesis; menaquinol from 1,4-dihydroxy-2-naphthoate: step 2/2. Its function is as follows. Methyltransferase required for the conversion of demethylmenaquinol (DMKH2) to menaquinol (MKH2). In Lysinibacillus sphaericus (strain C3-41), this protein is Demethylmenaquinone methyltransferase.